We begin with the raw amino-acid sequence, 134 residues long: Small ribosomal subunit protein bS16 (134 aa).

The segment at E105 to G134 is disordered. The span at R109–K123 shows a compositional bias: basic residues.

Belongs to the bacterial ribosomal protein bS16 family.

The chain is Small ribosomal subunit protein bS16 from Chlorobaculum parvum (strain DSM 263 / NCIMB 8327) (Chlorobium vibrioforme subsp. thiosulfatophilum).